Reading from the N-terminus, the 573-residue chain is Putative 15-O-acetyltransferase SAT12 (573 aa).

The interval 1–40 is disordered; that stretch reads MLDDDCSPTSSSEMSNASSREASITSRSSSTSGNNSLPED. Over residues 7-36 the composition is skewed to low complexity; the sequence is SPTSSSEMSNASSREASITSRSSSTSGNNS.

The protein belongs to the trichothecene O-acetyltransferase family.

It functions in the pathway mycotoxin biosynthesis. Putative 15-O-acetyltransferase; part of the satratoxin SC2 cluster involved in the biosynthesis of satratoxins, trichothecene mycotoxins that are associated with human food poisonings. Satratoxins are suggested to be made by products of multiple gene clusters (SC1, SC2 and SC3) that encode 21 proteins in all, including polyketide synthases, acetyltransferases, and other enzymes expected to modify the trichothecene skeleton. SC1 encodes 10 proteins, SAT1 to SAT10. The largest are SAT8, which encodes a putative polyketide synthase (PKS) with a conventional non-reducing architecture, and SAT10, a putative protein containing four ankyrin repeats and thus may be involved in protein scaffolding. The putative short-chain reductase SAT3 may assist the PKS in some capacity. SAT6 contains a secretory lipase domain and acts probably as a trichothecene esterase. SAT5 encodes a putative acetyltransferase, and so, with SAT6, may affect endogenous protection from toxicity. The probable transcription factor SAT9 may regulate the expression of the SC1 cluster. SC2 encodes proteins SAT11 to SAT16, the largest of which encodes the putative reducing PKS SAT13. SAT11 is a cytochrome P450 monooxygenase, while SAT14 and SAT16 are probable acetyltransferases. The SC2 cluster may be regulated by the transcription factor SAT15. SC3 is a small cluster that encodes 5 proteins, SAT17 to SAT21. SAT21 is a putative MFS-type transporter which may have a role in exporting secondary metabolites. The four other proteins putatively encoded in SC3 include the taurine hydroxylase-like protein SAT17, the O-methyltransferase SAT18, the acetyltransferase SAT19, and the Cys6-type zinc finger SAT20, the latter being probably involved in regulation of SC3 expression. In Stachybotrys chartarum (strain CBS 109288 / IBT 7711) (Toxic black mold), this protein is Putative 15-O-acetyltransferase SAT12.